The chain runs to 402 residues: Oxysterol-binding protein 12 (402 aa).

The segment at 333 to 366 is disordered; that stretch reads NNNNDKETAEEKAKIEEKQRKEESERREKGILWE. The span at 336 to 366 shows a compositional bias: basic and acidic residues; sequence NDKETAEEKAKIEEKQRKEESERREKGILWE.

The protein belongs to the OSBP family.

The protein is Oxysterol-binding protein 12 (osbL) of Dictyostelium discoideum (Social amoeba).